Reading from the N-terminus, the 218-residue chain is uncharacterized protein (218 aa).

3 disordered regions span residues 30–71 (FSHR…RSPP), 93–120 (SGRGGGGGGGGGARTGGGEGEDRRPRPD), and 133–209 (MEVE…PGFP). The segment covering 43-71 (PGAPAVVPAPVSAPRPASSPARSESRSPP) has biased composition (low complexity). A compositionally biased stretch (gly residues) spans 94–110 (GRGGGGGGGGGARTGGG). Pro residues predominate over residues 138–148 (PPHPPPQPQVC). Residues 156-171 (PGHGRAGLPEGKGPGG) are compositionally biased toward gly residues. A compositionally biased stretch (low complexity) spans 191–209 (RAPSPAAPRRGRLPAPGFP).

This is an uncharacterized protein from Homo sapiens (Human).